Here is a 776-residue protein sequence, read N- to C-terminus: MQSRLVSQSGLGRRWAVLRCALSKTYQRRTLTSTRRQFQDVFQSQLEDPTSAALFSALNSSKAVPQTLTEKIVQKYSVGLPQGKFVKSGDYVTIQPHRCMTHDNSWPCALKFMSIGASRLHNPDQIVMTLDHDVQNKSDKNLKKYRQIEEFATQHGVEFYPAGRGIGHQIMIEEGFAWPGTLAVASDSHSNMYGGVGCLGTPIVRTDAASVWATGKTWWQIPPVAKVTFKGVLPPGVTGKDVIVALCGLFNKDDVLNHAIEFTGSEETMRSLSVDTRLTIANMTTEWGALSGLFPIDSVLKGWLRGKATTAAMGLADGPFKTRAAERFTHPLLEQLFENPLTADKGAKYAKELFLDLSSLSPYVSGPNSVKVATPLKELEAQNIKVDKAYLVSCTNSRASDIAAAAKVFKEAAEKNGGKIPKIADGVKFYIAAASIPEQLAAEGNGDWQTLLEAGATQLPAGCGPCIGMGQGLLEPGEVGISASNRNFKGRMGSTEAKAYLGSPEVVAASALSGKLSGPGWYQTPEGWTEVIRGEGDGIREEDRMLTNEEALEKIIGQLDDLVADGEKRFASETPAVEESEQGLTEIYPGFPERVSGELVFCDADNVNTDGIYPGKYTYQDDVPPETMARVCMENYDPEFSTTAKEGDILVSGFNFGCGSSREQAATAILAKKIPLVVSGSFGNIFSRNSINNALMGLEVPRLVNRLRETFGSGDKVLTRRTGWTLTWDVRKSQIEVQEGPGGPKWTHKVGELPPNVQEIIAKGGLEKWVKNAIGA.

The transit peptide at Met1–Phe38 directs the protein to the mitochondrion. 3 residues coordinate [4Fe-4S] cluster: Cys394, Cys463, and Cys466.

This sequence belongs to the aconitase/IPM isomerase family. The cofactor is [4Fe-4S] cluster.

It is found in the mitochondrion. The enzyme catalyses (2R,3S)-homoisocitrate = cis-homoaconitate + H2O. Its pathway is amino-acid biosynthesis; L-lysine biosynthesis via AAA pathway; L-alpha-aminoadipate from 2-oxoglutarate: step 3/5. Its function is as follows. Catalyzes the reversible hydration of cis-homoaconitate to (2R,3S)-homoisocitrate, a step in the alpha-aminoadipate pathway for lysine biosynthesis. The chain is Homoaconitase, mitochondrial (lys4) from Emericella nidulans (strain FGSC A4 / ATCC 38163 / CBS 112.46 / NRRL 194 / M139) (Aspergillus nidulans).